Reading from the N-terminus, the 89-residue chain is Small ribosomal subunit protein bS20 (89 aa).

Belongs to the bacterial ribosomal protein bS20 family.

Binds directly to 16S ribosomal RNA. This chain is Small ribosomal subunit protein bS20, found in Solidesulfovibrio magneticus (strain ATCC 700980 / DSM 13731 / RS-1) (Desulfovibrio magneticus).